A 557-amino-acid polypeptide reads, in one-letter code: Copine-6 (557 aa).

2 consecutive C2 domains span residues 2 to 127 (SDPE…TKPL) and 134 to 263 (TAGK…MQWD). The Ca(2+) site is built by D167, D173, D229, D231, and D237. The tract at residues 244–303 (STFQEMQEGTANPGQEMQWDCINPKYRDKKKNYKSSGTVVLAQCTVEKVHTFLDYIMGGC) is linker region. The 221-residue stretch at 306–526 (SFTVAIDFTA…ALAKRVLAEV (221 aa)) folds into the VWFA domain.

It belongs to the copine family. Interacts (via second C2 domain) with OS9 (via C-terminus); this interaction occurs in a calcium-dependent manner in vitro. May interact with NECAB1. It depends on Ca(2+) as a cofactor.

Its subcellular location is the cytoplasm. It is found in the cell membrane. It localises to the endosome. The protein resides in the cytoplasmic vesicle. The protein localises to the clathrin-coated vesicle. Its subcellular location is the perikaryon. It is found in the cell projection. It localises to the dendrite. Its function is as follows. Calcium-dependent phospholipid-binding protein that plays a role in calcium-mediated intracellular processes. Binds phospholipid membranes in a calcium-dependent manner. Plays a role in dendrite formation by melanocytes. This chain is Copine-6, found in Pongo abelii (Sumatran orangutan).